Consider the following 1960-residue polypeptide: Exophilin-5 (1960 aa).

The 57-residue stretch at 7-63 (GFDFSFLNEEEARKILQVLERNEELRRAEKDRISKLQKTKRDIRWLQGATGEWFEEI) folds into the RabBD domain. Composition is skewed to polar residues over residues 325–334 (ASPATGSFTA), 342–366 (DTQNKSSFTPVRHQQSPKRTPLSSI), and 635–645 (SQSSSFPDSTA). 5 disordered regions span residues 325 to 366 (ASPA…LSSI), 616 to 645 (TPASSFRTPFPLSPDDGRESQSSSFPDSTA), 672 to 720 (HSTD…TGLP), 734 to 835 (DFQN…SSNT), and 910 to 976 (FSRS…KGRV). A compositionally biased stretch (low complexity) spans 673-682 (STDSLSLTDT). Over residues 692–707 (NSEKDMDVSVSKDEQL) the composition is skewed to basic and acidic residues. Residues Ser799 and Ser802 each carry the phosphoserine modification. Composition is skewed to polar residues over residues 808 to 835 (ESGTATSLPSPNQGCHQKTGSNEESSNT) and 910 to 920 (FSRSLSDQDPG). The segment covering 921–932 (QEQREEKDKATK) has biased composition (basic and acidic residues). Residues 933 to 945 (SQDNQLAVNSTDN) are compositionally biased toward polar residues. At Ser1027 the chain carries Phosphoserine. The disordered stretch occupies residues 1035–1095 (QESKGTVASV…PKATKKMTDM (61 aa)). Over residues 1062 to 1074 (GKSTSDKPSSPES) the composition is skewed to polar residues. Residues Ser1083 and Ser1117 each carry the phosphoserine modification. 3 disordered regions span residues 1291–1375 (AQVQ…LSRE), 1389–1493 (PLLH…DSES), and 1510–1759 (EAQP…EPHL). Over residues 1318 to 1336 (PESKDVSQLPDRETSKSTL) the composition is skewed to basic and acidic residues. Polar residues predominate over residues 1356 to 1365 (KEISPSNVSK). Positions 1392-1403 (HQEKGAGKEHTK) are enriched in basic and acidic residues. Composition is skewed to polar residues over residues 1470–1493 (RETSGTTGSDCQNPTDKMLSDSES) and 1520–1533 (SEASQAGSQETNTA). At Ser1493 the chain carries Phosphoserine. 2 stretches are compositionally biased toward basic and acidic residues: residues 1534 to 1546 (EMRKVEDEEHMLT) and 1561 to 1571 (TNTDETKDRYS). The segment covering 1572–1586 (GKHRLAAISKASKRI) has biased composition (basic residues). Positions 1637-1657 (ESSQMNVDKSETLLQETTVSS) are enriched in polar residues. Residues Ser1724, Ser1739, Ser1789, and Ser1819 each carry the phosphoserine modification. The segment covering 1732 to 1741 (TQKSTINSHC) has biased composition (polar residues). 2 disordered regions span residues 1828–1847 (ESESWTSYSNRTRGPKSTSS) and 1906–1960 (VNSP…ESEL). Positions 1939-1950 (WDTDTTTDDEYY) are enriched in acidic residues. Basic and acidic residues predominate over residues 1951 to 1960 (LDEKDKESEL).

Interacts with RAB27A.

Functionally, may act as Rab effector protein and play a role in vesicle trafficking. The polypeptide is Exophilin-5 (Mus musculus (Mouse)).